The sequence spans 326 residues: Probable cell division protein WhiA (326 aa).

Residues 275 to 308 (SLEELGALADPPLTKDAIAGRIRRLLALADKRAR) constitute a DNA-binding region (H-T-H motif).

It belongs to the WhiA family.

In terms of biological role, involved in cell division and chromosome segregation. This is Probable cell division protein WhiA from Salinispora tropica (strain ATCC BAA-916 / DSM 44818 / JCM 13857 / NBRC 105044 / CNB-440).